Consider the following 514-residue polypeptide: MELGPEPPHRRRLFFACSPTPAPQPTGKMLFGASAAGGLSPVTNLTVTMDQLEGLGSDCEKMEVRNNSSLQRMGSSESTDSGFCLDSPGPLDSKENLEISLTRINSLPQKLLGCSPALKRSHSDSLDHDTFHLIDQDENKENEAFEFKKPIRPASRHIYEESKDPFTHRQNSAPARMLSSNESESGNFSPLFIPQSPVKATLSDEDDGFIDLLDGENMKNDEETPSCMASLWTAPLVMRRPANLADRCGLFDSPSPCGSSTRAVLKRADRSHEEPPRGTKRRKSVPSPVKAKADVPEPAQLPSQSLSLMSSPKGTIENILDSDPRDLIGDFSKGYLFNTVSGKHQDLKYISPEIMASVLNGKFAGLIKEFVIIDCRYPYEYEGGHIKGAVNLHMEEEVEDFLLKNPIVPTDGKRVIVVFHCEFSSERGPRMCRYVRERDRLGNEYPKLHYPELYVLKGGYKEFFLKCQSHCEPPSYRPMHHEDFKEDLKKFRTKSRTWAGEKSKREMYSRLKKL.

The short motif at 73-83 (MGSSESTDSGF) is the Phosphodegron element. Ser-75 bears the Phosphoserine; by CHEK1 mark. A phosphoserine; by NEK11 mark is found at Ser-78, Ser-81, and Ser-87. Phosphoserine is present on Ser-106. Ser-123 carries the phosphoserine; by CHEK1 and CHEK2 modification. Positions 140–142 (KEN) match the KEN box motif. Position 172 is a phosphoserine; by CHEK1 (Ser-172). The disordered stretch occupies residues 256-308 (PCGSSTRAVLKRADRSHEEPPRGTKRRKSVPSPVKAKADVPEPAQLPSQSLSL). Positions 266–277 (KRADRSHEEPPR) are enriched in basic and acidic residues. Phosphoserine; by CHEK1 and CHEK2 occurs at positions 271 and 284. Ser-311 is subject to Phosphoserine. Positions 366 to 472 (LIKEFVIIDC…FFLKCQSHCE (107 aa)) constitute a Rhodanese domain. Cys-421 is an active-site residue. Thr-497 is subject to Phosphothreonine; by CHEK1. Phosphoserine; by PLK3 occurs at positions 503 and 509.

Belongs to the MPI phosphatase family. As to quaternary structure, interacts with CCNB1/cyclin B1. Interacts with YWHAE/14-3-3 epsilon when phosphorylated. Interacts with CUL1 specifically when CUL1 is neddylated and active. Interacts with BTRC/BTRCP1 and FBXW11/BTRCP2. Interactions with CUL1, BTRC and FBXW11 are enhanced upon DNA damage. Interacts with CHEK2; mediates CDC25A phosphorylation and degradation in response to infrared-induced DNA damages. Interacts with HSP90AB1; prevents heat shock-mediated CDC25A degradation and contributes to cell cycle progression. Phosphorylated by CHEK1 on Ser-75, Ser-123, Ser-172, Ser-271, Ser-284 and Thr-497 during checkpoint mediated cell cycle arrest. Also phosphorylated by CHEK2 on Ser-123, Ser-271, and Ser-284 during checkpoint mediated cell cycle arrest. Phosphorylation on Ser-172 and Thr-497 creates binding sites for YWHAE/14-3-3 epsilon which inhibits CDC25A. Phosphorylation on Ser-75, Ser-123, Ser-172, Ser-271 and Ser-284 may also promote ubiquitin-dependent proteolysis of CDC25A by the SCF complex. Phosphorylation of CDC25A at Ser-75 by CHEK1 primes it for subsequent phosphorylation at Ser-75, Ser-81 and Ser-87 by NEK11. Phosphorylation by NEK11 is required for BTRC-mediated polyubiquitination and degradation. Phosphorylation by PIM1 leads to an increase in phosphatase activity. Phosphorylated by PLK3 following DNA damage, leading to promote its ubiquitination and degradation. In terms of processing, ubiquitinated by the anaphase promoting complex/cyclosome (APC/C) ubiquitin ligase complex that contains FZR1/CDH1 during G1 phase leading to its degradation by the proteasome. Ubiquitinated by a SCF complex containing BTRC and FBXW11 during S phase leading to its degradation by the proteasome. Deubiquitination by USP17L2/DUB3 leads to its stabilization. As to expression, ubiquitously expressed in most developing tissue. High levels in the testis and lower levels in the ovary, particularly in germ cells. Lower levels also in kidney, liver, heart and muscle.

It carries out the reaction O-phospho-L-tyrosyl-[protein] + H2O = L-tyrosyl-[protein] + phosphate. Stimulated by B-type cyclins. Stimulated by PIM1-mediated phosphorylation. Functionally, tyrosine protein phosphatase which functions as a dosage-dependent inducer of mitotic progression. Directly dephosphorylates CDK1 and stimulates its kinase activity. Also dephosphorylates CDK2 in complex with cyclin-E, in vitro. The chain is M-phase inducer phosphatase 1 (Cdc25a) from Mus musculus (Mouse).